The chain runs to 358 residues: UDP-N-acetylglucosamine--N-acetylmuramyl-(pentapeptide) pyrophosphoryl-undecaprenol N-acetylglucosamine transferase (358 aa).

Residues 11–13 (TGG), asparagine 120, arginine 161, serine 188, and glutamine 282 contribute to the UDP-N-acetyl-alpha-D-glucosamine site.

This sequence belongs to the glycosyltransferase 28 family. MurG subfamily.

The protein localises to the cell inner membrane. The catalysed reaction is di-trans,octa-cis-undecaprenyl diphospho-N-acetyl-alpha-D-muramoyl-L-alanyl-D-glutamyl-meso-2,6-diaminopimeloyl-D-alanyl-D-alanine + UDP-N-acetyl-alpha-D-glucosamine = di-trans,octa-cis-undecaprenyl diphospho-[N-acetyl-alpha-D-glucosaminyl-(1-&gt;4)]-N-acetyl-alpha-D-muramoyl-L-alanyl-D-glutamyl-meso-2,6-diaminopimeloyl-D-alanyl-D-alanine + UDP + H(+). The protein operates within cell wall biogenesis; peptidoglycan biosynthesis. Cell wall formation. Catalyzes the transfer of a GlcNAc subunit on undecaprenyl-pyrophosphoryl-MurNAc-pentapeptide (lipid intermediate I) to form undecaprenyl-pyrophosphoryl-MurNAc-(pentapeptide)GlcNAc (lipid intermediate II). The sequence is that of UDP-N-acetylglucosamine--N-acetylmuramyl-(pentapeptide) pyrophosphoryl-undecaprenol N-acetylglucosamine transferase from Synechococcus sp. (strain CC9902).